The primary structure comprises 570 residues: Ribosome-inactivating protein SNAIf (570 aa).

Residues 1-28 (MRVVTKLLYLVVLAICGLGIHGALTHTR) form the signal peptide. 3 N-linked (GlcNAc...) asparagine glycosylation sites follow: asparagine 40, asparagine 62, and asparagine 140. Glutamate 199 is a catalytic residue. The N-linked (GlcNAc...) asparagine glycan is linked to asparagine 232. 3 cysteine pairs are disulfide-bonded: cysteine 284-cysteine 316, cysteine 332-cysteine 351, and cysteine 373-cysteine 385. Ricin B-type lectin domains are found at residues 319–439 (VEVT…WTVG) and 441–566 (VEPL…WITT). The stretch at 329-369 (DGLCVDVRDGHYIDGNTVQLGPCGNECNQLWTFRTDGTIRW) is one 1-alpha repeat. A 1-beta repeat occupies 370–405 (LGKCLTTSSSVMIYDCNTVPPEATKWVVSTDGTITN). One copy of the 1-gamma repeat lies at 408-440 (SGLVLTAPQAAEGTALSLENNIHAARQGWTVGD). Residues 452–489 (KQMCLTENGENNFVWLEDCVLNRVEQEWALYGDGTIRV) form a 2-alpha repeat. Cysteine 455 and cysteine 470 are joined by a disulfide. A glycan (N-linked (GlcNAc...) asparagine) is linked at asparagine 492. Residues 493–531 (RSLCVTSEDHEPSDLIVILKCEGSGNQRWVFNTNGTISN) form a 2-beta repeat. A disulfide bond links cysteine 496 and cysteine 513. Residues asparagine 526 and asparagine 544 are each glycosylated (N-linked (GlcNAc...) asparagine). The stretch at 534-567 (AKLVMDVAQSNVSLRKIILYPPTGNPNQQWITTT) is one 2-gamma repeat.

It belongs to the ribosome-inactivating protein family. Type 2 RIP subfamily. In terms of assembly, tetramer of four pairs of disulfide bound A-B chains. In terms of processing, the precursor is processed in two chains, A and B, that are linked by a disulfide bond. A small truncated form corresponding roughly to the second ricin B-type lectin domain of the B chain, TrSNAIf, can also be produced. Post-translationally, N-glycosylated. As to expression, expressed in fruits.

The catalysed reaction is Endohydrolysis of the N-glycosidic bond at one specific adenosine on the 28S rRNA.. Neu5Ac(alpha2-6)Gal/GalNAc specific agglutinin. Behaves as a type-2 ribosome-inactivating protein. Strongly inhibits mammalian but not plant ribosomes. The A chain is responsible for inhibiting protein synthesis through the catalytic inactivation of 60S ribosomal subunits by removing adenine from position 4,324 of 28S rRNA. The B chain binds to cell receptors and probably facilitates the entry into the cell of the A chain; B chains are also responsible for cell agglutination (lectin activity). Involved in plant defense against insects. Functionally, binds Neu5Ac(alpha2-6)Gal/GalNAc but has no clear agglutination activity. This is Ribosome-inactivating protein SNAIf from Sambucus nigra (European elder).